The following is a 213-amino-acid chain: Thymidylate kinase (213 aa).

10-17 (GLEGAGKT) is an ATP binding site.

Belongs to the thymidylate kinase family.

It carries out the reaction dTMP + ATP = dTDP + ADP. Phosphorylation of dTMP to form dTDP in both de novo and salvage pathways of dTTP synthesis. This Escherichia coli O6:H1 (strain CFT073 / ATCC 700928 / UPEC) protein is Thymidylate kinase.